The following is a 163-amino-acid chain: Nucleotide-binding protein HDEF_1968 (163 aa).

It belongs to the YajQ family.

Functionally, nucleotide-binding protein. This Hamiltonella defensa subsp. Acyrthosiphon pisum (strain 5AT) protein is Nucleotide-binding protein HDEF_1968.